Reading from the N-terminus, the 233-residue chain is uncharacterized protein (233 aa).

The first 23 residues, 1–23 (MEIKYFLVLLVGFLLVLPSIVNP), serve as a signal peptide directing secretion. Residues 42–217 (LDVNNPHNPN…HHHHQEASEC (176 aa)) form a disordered region. Positions 45-64 (NNPHNPNNNPHNPHNPNNNP) are enriched in low complexity. The segment covering 65-211 (HHPHHLHHHH…HPHPHHHHHH (147 aa)) has biased composition (basic residues).

The protein resides in the secreted. This is an uncharacterized protein from Dictyostelium discoideum (Social amoeba).